Reading from the N-terminus, the 326-residue chain is Putative ribose-phosphate pyrophosphokinase 2 (326 aa).

Residues 43 to 45 and 102 to 103 contribute to the ATP site; these read DGE and RQ. Mg(2+) is bound at residue histidine 136. Residues aspartate 226 and 230–234 each bind D-ribose 5-phosphate; that span reads NTGKT.

It belongs to the ribose-phosphate pyrophosphokinase family. Class I subfamily. As to quaternary structure, homohexamer. The cofactor is Mg(2+).

The protein resides in the cytoplasm. The enzyme catalyses D-ribose 5-phosphate + ATP = 5-phospho-alpha-D-ribose 1-diphosphate + AMP + H(+). It participates in metabolic intermediate biosynthesis; 5-phospho-alpha-D-ribose 1-diphosphate biosynthesis; 5-phospho-alpha-D-ribose 1-diphosphate from D-ribose 5-phosphate (route I): step 1/1. Involved in the biosynthesis of the central metabolite phospho-alpha-D-ribosyl-1-pyrophosphate (PRPP) via the transfer of pyrophosphoryl group from ATP to 1-hydroxyl of ribose-5-phosphate (Rib-5-P). This is Putative ribose-phosphate pyrophosphokinase 2 from Streptococcus mutans serotype c (strain ATCC 700610 / UA159).